The primary structure comprises 454 residues: V-type ATP synthase subunit I 2 (454 aa).

Residues 101 to 121 (EREGDAPSVPRGKSSVAHDSA) form a disordered region. The next 4 helical transmembrane spans lie at 254–274 (LLFG…VLGL), 293–313 (VFLS…EFFA), 351–371 (MAFF…GLII), and 424–444 (ACLS…SVCV).

Belongs to the V-ATPase 116 kDa subunit family.

It localises to the cell membrane. Functionally, produces ATP from ADP in the presence of a proton gradient across the membrane. The protein is V-type ATP synthase subunit I 2 (atpI2) of Treponema pallidum (strain Nichols).